The sequence spans 189 residues: dCTP deaminase (189 aa).

DCTP is bound by residues 112–117 (KSTYAR), 136–138 (TLE), glutamine 157, tyrosine 171, and glutamine 181. The Proton donor/acceptor role is filled by glutamate 138.

The protein belongs to the dCTP deaminase family. As to quaternary structure, homotrimer.

It catalyses the reaction dCTP + H2O + H(+) = dUTP + NH4(+). Its pathway is pyrimidine metabolism; dUMP biosynthesis; dUMP from dCTP (dUTP route): step 1/2. In terms of biological role, catalyzes the deamination of dCTP to dUTP. The polypeptide is dCTP deaminase (Xanthomonas axonopodis pv. citri (strain 306)).